The chain runs to 97 residues: uncharacterized protein (97 aa).

This is an uncharacterized protein from Emericella nidulans (Aspergillus nidulans).